Reading from the N-terminus, the 215-residue chain is Adenylate kinase (215 aa).

14–19 serves as a coordination point for ATP; it reads GVGKGT. Residues 34–63 are NMP; sequence STGDIFRSVMQEQGALSQTLAHYMNQGLYV. Residues T35, R40, 61 to 63, 91 to 94, and Q98 contribute to the AMP site; these read LYV and GYPR. The interval 128–165 is LID; the sequence is NRLVCPSCGSVYNKQSKPPLKANQCDRCHATLQARNDD. ATP is bound at residue R129. The Zn(2+) site is built by C132 and C135. Residue 138-139 coordinates ATP; it reads VY. Residues C152 and C155 each contribute to the Zn(2+) site. The AMP site is built by R162 and R173. Residue Q211 participates in ATP binding.

The protein belongs to the adenylate kinase family. As to quaternary structure, monomer.

It localises to the cytoplasm. It catalyses the reaction AMP + ATP = 2 ADP. It participates in purine metabolism; AMP biosynthesis via salvage pathway; AMP from ADP: step 1/1. Catalyzes the reversible transfer of the terminal phosphate group between ATP and AMP. Plays an important role in cellular energy homeostasis and in adenine nucleotide metabolism. In Mycoplasma pneumoniae (strain ATCC 29342 / M129 / Subtype 1) (Mycoplasmoides pneumoniae), this protein is Adenylate kinase.